The chain runs to 404 residues: DNA gyrase subunit B (404 aa).

A Toprim domain is found at 321 to 404 (SEIYIVEGDS…VIIMTDADVD (84 aa)). Mg(2+) is bound by residues E327, D400, and D402.

It belongs to the type II topoisomerase GyrB family. Heterotetramer, composed of two GyrA and two GyrB chains. In the heterotetramer, GyrA contains the active site tyrosine that forms a transient covalent intermediate with DNA, while GyrB binds cofactors and catalyzes ATP hydrolysis. Mg(2+) is required as a cofactor. Requires Mn(2+) as cofactor. Ca(2+) serves as cofactor.

The protein resides in the cytoplasm. It catalyses the reaction ATP-dependent breakage, passage and rejoining of double-stranded DNA.. Functionally, a type II topoisomerase that negatively supercoils closed circular double-stranded (ds) DNA in an ATP-dependent manner to modulate DNA topology and maintain chromosomes in an underwound state. Negative supercoiling favors strand separation, and DNA replication, transcription, recombination and repair, all of which involve strand separation. Also able to catalyze the interconversion of other topological isomers of dsDNA rings, including catenanes and knotted rings. Type II topoisomerases break and join 2 DNA strands simultaneously in an ATP-dependent manner. The protein is DNA gyrase subunit B (gyrB) of Bacillus cereus.